The chain runs to 117 residues: Multidrug resistance protein EbrB (117 aa).

4 helical membrane passes run 3-23 (GLLY…MLKL), 31-51 (WPIA…SFSL), 59-79 (AYAT…FLLF), and 81-101 (ETIS…VVVL).

This sequence belongs to the drug/metabolite transporter (DMT) superfamily. Small multidrug resistance (SMR) (TC 2.A.7.1) family. EbrA/EbrB subfamily. As to quaternary structure, the efflux pump is composed of EbrA and EbrB.

It localises to the cell membrane. In terms of biological role, part of a multidrug efflux pump. Confers resistance to cationic lipophilic dyes such as ethidium bromide, acriflavine, pyronine Y and safranin O. The efflux is probably coupled to an influx of protons. This Bacillus subtilis (strain 168) protein is Multidrug resistance protein EbrB (ebrB).